A 265-amino-acid polypeptide reads, in one-letter code: GTP cyclohydrolase 1 type 2 homolog (265 aa).

Residues histidine 65, aspartate 103, histidine 225, and glutamate 228 each contribute to the a divalent metal cation site.

This sequence belongs to the GTP cyclohydrolase I type 2/NIF3 family. In terms of assembly, homohexamer.

This is GTP cyclohydrolase 1 type 2 homolog from Streptococcus pneumoniae serotype 4 (strain ATCC BAA-334 / TIGR4).